A 101-amino-acid polypeptide reads, in one-letter code: Small ribosomal subunit protein uS14 (101 aa).

Belongs to the universal ribosomal protein uS14 family. Part of the 30S ribosomal subunit. Contacts proteins S3 and S10.

Binds 16S rRNA, required for the assembly of 30S particles and may also be responsible for determining the conformation of the 16S rRNA at the A site. This is Small ribosomal subunit protein uS14 from Gluconobacter oxydans (strain 621H) (Gluconobacter suboxydans).